We begin with the raw amino-acid sequence, 243 residues long: uncharacterized protein (243 aa).

One can recognise a GP-PDE domain in the interval 2–240 (TKIFAHRGAS…DFPEKASALL (239 aa)).

This is an uncharacterized protein from Bacillus subtilis (strain 168).